The chain runs to 394 residues: MTPQVLTILGSTGSIGESTLDVVSRHPEKFRVFALAGHKQVEKLAAQCQTFHPEYAVVADAEHAARLEALLKRDGTATQVLHGAQALVDVASADEVSGVMCAIVGAVGLPSALAAAQKGKTIYLANKETLVVSGALFMETARANGAAVLPVDSEHNAVFQVLPRDYAGRLNEHGIASIILTASGGPFLTADLNTFDRITPAQAVKHPNWRMGRKISVDSATMMNKGLELIEAHWLFNCPPDKLEVVIHPQSVIHSMVRYRDGSVLAQLGNPDMRTPIAYCLGLPERIDSGVGDLDFDALSALTFQKPDFDRFPCLRLAYEAMNAGGAAPCVLNAANEAAVAAFLDGQIKFTDIAKTVAHCLAQDFSDGIGDIGGLLAQDARTRAQARAFIGTLR.

7 residues coordinate NADPH: T12, G13, S14, I15, K39, Q40, and N126. K127 serves as a coordination point for 1-deoxy-D-xylulose 5-phosphate. Position 128 (E128) interacts with NADPH. Residue D152 coordinates Mn(2+). Residues S153, E154, S183, and H206 each contribute to the 1-deoxy-D-xylulose 5-phosphate site. A Mn(2+)-binding site is contributed by E154. Position 212 (G212) interacts with NADPH. 4 residues coordinate 1-deoxy-D-xylulose 5-phosphate: S219, N224, K225, and E228. E228 is a Mn(2+) binding site.

Belongs to the DXR family. Mg(2+) is required as a cofactor. It depends on Mn(2+) as a cofactor.

The enzyme catalyses 2-C-methyl-D-erythritol 4-phosphate + NADP(+) = 1-deoxy-D-xylulose 5-phosphate + NADPH + H(+). The protein operates within isoprenoid biosynthesis; isopentenyl diphosphate biosynthesis via DXP pathway; isopentenyl diphosphate from 1-deoxy-D-xylulose 5-phosphate: step 1/6. Its function is as follows. Catalyzes the NADPH-dependent rearrangement and reduction of 1-deoxy-D-xylulose-5-phosphate (DXP) to 2-C-methyl-D-erythritol 4-phosphate (MEP). In Neisseria meningitidis serogroup B (strain ATCC BAA-335 / MC58), this protein is 1-deoxy-D-xylulose 5-phosphate reductoisomerase.